An 83-amino-acid chain; its full sequence is Aminoacyl carrier protein (83 aa).

The region spanning 1-80 is the Carrier domain; the sequence is MNATIREILA…DTVKLILDGK (80 aa). Ser-35 carries the post-translational modification O-(pantetheine 4'-phosphoryl)serine.

In terms of processing, 4'-phosphopantetheine is transferred from CoA to a specific serine of the apo-form of this carrier protein.

Aminoacyl carrier protein. Can be charged with L-alanine, L-glycine or L-serine, via the formation of a thioester bond between the amino acid and the 4'-phosphopantetheinyl prosthetic group, catalyzed by the Atu2573 ligase. The polypeptide is Aminoacyl carrier protein (Agrobacterium fabrum (strain C58 / ATCC 33970) (Agrobacterium tumefaciens (strain C58))).